The following is a 375-amino-acid chain: Phospho-N-acetylmuramoyl-pentapeptide-transferase (375 aa).

Helical transmembrane passes span 2–22, 55–75, 82–102, 120–140, 158–178, 198–218, 237–257, 264–284, 289–309, and 345–365; these read IGLL…TPLF, AVII…LAVL, PTAS…VGFV, GKII…LNFP, IPWL…FVIW, GLAT…SLFQ, PMDL…FLWW, IFMG…FAIF, ILVA…IIQV, and WLLS…DWLI.

The protein belongs to the glycosyltransferase 4 family. MraY subfamily. Mg(2+) serves as cofactor.

It localises to the cell membrane. It catalyses the reaction UDP-N-acetyl-alpha-D-muramoyl-L-alanyl-gamma-D-glutamyl-meso-2,6-diaminopimeloyl-D-alanyl-D-alanine + di-trans,octa-cis-undecaprenyl phosphate = di-trans,octa-cis-undecaprenyl diphospho-N-acetyl-alpha-D-muramoyl-L-alanyl-D-glutamyl-meso-2,6-diaminopimeloyl-D-alanyl-D-alanine + UMP. The protein operates within cell wall biogenesis; peptidoglycan biosynthesis. Functionally, catalyzes the initial step of the lipid cycle reactions in the biosynthesis of the cell wall peptidoglycan: transfers peptidoglycan precursor phospho-MurNAc-pentapeptide from UDP-MurNAc-pentapeptide onto the lipid carrier undecaprenyl phosphate, yielding undecaprenyl-pyrophosphoryl-MurNAc-pentapeptide, known as lipid I. This Micrococcus luteus (strain ATCC 4698 / DSM 20030 / JCM 1464 / CCM 169 / CCUG 5858 / IAM 1056 / NBRC 3333 / NCIMB 9278 / NCTC 2665 / VKM Ac-2230) (Micrococcus lysodeikticus) protein is Phospho-N-acetylmuramoyl-pentapeptide-transferase.